The chain runs to 382 residues: Cholinephosphotransferase 1 (382 aa).

At 1 to 51 the chain is on the cytoplasmic side; that stretch reads MPQCECPEPLSAVQLKRLEEHKYSAAGRSLFEPPCQIYWNWLVQQIPTWVA. The helical transmembrane segment at 52 to 72 threads the bilayer; the sequence is PNTLTTIGLVINVITTVILVY. Asn53 contacts CDP-choline. Over 73-82 the chain is Lumenal; that stretch reads YSPTATEEVP. The helical transmembrane segment at 83-107 threads the bilayer; that stretch reads GWAFFLSALGLFIYQSLDAIDGKQA. Asp100 and Asp103 together coordinate Mg(2+). Arg108 contacts CDP-choline. Over 108-114 the chain is Cytoplasmic; sequence RRTNSSS. Residues 115–139 traverse the membrane as a helical segment; the sequence is ALGELFDHGCDAVSTVFVAVGTCIC. Mg(2+) is bound at residue Asp121. His122 (proton acceptor) is an active-site residue. Position 125 (Asp125) interacts with Mg(2+). Residues 140 to 149 are Lumenal-facing; sequence CGIGAYPNWM. A helical membrane pass occupies residues 150 to 168; it reads FFCGFVGMFMFFCAHWQTY. At 169–179 the chain is on the cytoplasmic side; the sequence is VSGTLRFGLVD. A helical transmembrane segment spans residues 180 to 196; the sequence is VTEVQIAIIIMYLLTAF. Residues 197–211 are Lumenal-facing; it reads TGVSFWEMRVPVLGV. A helical transmembrane segment spans residues 212–237; it reads NLQTFPILGIIGGFLYSTYNYFFVIM. Topologically, residues 238 to 254 are cytoplasmic; it reads NGGVGKNGSTVADTSVL. A helical transmembrane segment spans residues 255 to 270; that stretch reads TPGLHIGLILTLAFII. At 271 to 282 the chain is on the lumenal side; that stretch reads FKKSSSHLFEHH. A helical transmembrane segment spans residues 283–305; it reads PCLYVLTFGMVIAKISNKLVVAH. Over 306–318 the chain is Cytoplasmic; that stretch reads MTKSELHLQDTAF. The helical transmembrane segment at 319-328 threads the bilayer; the sequence is IGPGLLFLNQ. Residues 329 to 335 lie on the Lumenal side of the membrane; the sequence is YFNSYID. Residues 336–365 traverse the membrane as a helical segment; it reads EHIVLWIAMVLSLVDLVRYCTAVCLQIASH. The Cytoplasmic segment spans residues 366 to 382; the sequence is LRIRVFSISPQGHAHKD.

The protein belongs to the CDP-alcohol phosphatidyltransferase class-I family. It depends on Mg(2+) as a cofactor. Mn(2+) is required as a cofactor.

The protein resides in the golgi apparatus membrane. The enzyme catalyses CDP-choline + a 1,2-diacyl-sn-glycerol = a 1,2-diacyl-sn-glycero-3-phosphocholine + CMP + H(+). It catalyses the reaction 1-octadecanoyl-2-(5Z,8Z,11Z,14Z-eicosatetraenoyl)-sn-glycerol + CDP-choline = 1-octadecanoyl-2-(5Z,8Z,11Z,14Z-eicosatetraenoyl)-sn-glycero-3-phosphocholine + CMP + H(+). The catalysed reaction is 1-hexadecanoyl-2-(9Z-octadecenoyl)-sn-glycerol + CDP-choline = 1-hexadecanoyl-2-(9Z-octadecenoyl)-sn-glycero-3-phosphocholine + CMP + H(+). It carries out the reaction 1-hexadecanoyl-2-(4Z,7Z,10Z,13Z,16Z,19Z-docosahexaenoyl)-sn-glycerol + CDP-choline = 1-hexadecanoyl-2-(4Z,7Z,10Z,13Z,16Z,19Z-docosahexaenoyl)-sn-glycero-3-phosphocholine + CMP + H(+). The enzyme catalyses 1,2-dioctanoyl-sn-glycerol + CDP-choline = 1,2-dioctanoyl-sn-glycero-3-phosphocholine + CMP + H(+). Its pathway is phospholipid metabolism; phosphatidylcholine biosynthesis; phosphatidylcholine from phosphocholine: step 2/2. Its function is as follows. Catalyzes the final step of de novo phosphatidylcholine (PC) synthesis, i.e. the transfer of choline phosphate from CDP-choline to the free hydroxyl of a diacylglycerol (DAG), producing a PC. It thereby plays a central role in the formation and maintenance of vesicular membranes. The polypeptide is Cholinephosphotransferase 1 (chpt1) (Danio rerio (Zebrafish)).